The sequence spans 430 residues: Trigger factor (430 aa).

The PPIase FKBP-type domain maps to 163–248 (GDTVVFDFAG…IHEIKAQELP (86 aa)).

It belongs to the FKBP-type PPIase family. Tig subfamily.

The protein localises to the cytoplasm. The catalysed reaction is [protein]-peptidylproline (omega=180) = [protein]-peptidylproline (omega=0). Functionally, involved in protein export. Acts as a chaperone by maintaining the newly synthesized protein in an open conformation. Functions as a peptidyl-prolyl cis-trans isomerase. In Exiguobacterium sibiricum (strain DSM 17290 / CCUG 55495 / CIP 109462 / JCM 13490 / 255-15), this protein is Trigger factor.